The following is a 135-amino-acid chain: Photosystem II extrinsic protein V (135 aa).

Positions 37, 40, 41, and 92 each coordinate heme c.

This sequence belongs to the cytochrome c family. PsbV subfamily. In terms of assembly, PSII is composed of 1 copy each of membrane proteins PsbA, PsbB, PsbC, PsbD, PsbE, PsbF, PsbH, PsbI, PsbJ, PsbK, PsbL, PsbM, PsbT, PsbX, PsbY, PsbZ, Psb30/Ycf12, peripheral proteins PsbO, CyanoQ (PsbQ), PsbU, PsbV and a large number of cofactors. It forms dimeric complexes. The cofactor is heme c.

Its subcellular location is the cellular thylakoid membrane. One of the extrinsic, lumenal subunits of photosystem II (PSII). PSII is a light-driven water plastoquinone oxidoreductase, using light energy to abstract electrons from H(2)O, generating a proton gradient subsequently used for ATP formation. The extrinsic proteins stabilize the structure of photosystem II oxygen-evolving complex (OEC), the ion environment of oxygen evolution and protect the OEC against heat-induced inactivation. Low-potential cytochrome c that plays a role in the OEC of PSII. In Microcystis aeruginosa, this protein is Photosystem II extrinsic protein V.